A 302-amino-acid polypeptide reads, in one-letter code: Phytoene synthase (302 aa).

The protein belongs to the phytoene/squalene synthase family. Requires ATP as cofactor. The cofactor is Mn(2+). Mg(2+) serves as cofactor.

It participates in carotenoid biosynthesis; phytoene biosynthesis. In terms of biological role, involved in the biosynthesis of carotenoids. Catalyzes the condensation of two molecules of geranylgeranyl diphosphate (GGPP) to give prephytoene diphosphate (PPPP) and the subsequent rearrangement of the cyclopropylcarbinyl intermediate to yield phytoene. In Mycobacterium bovis (strain ATCC BAA-935 / AF2122/97), this protein is Phytoene synthase (crtB).